The primary structure comprises 308 residues: tRNA pseudouridine synthase B (308 aa).

The active-site Nucleophile is D44.

Belongs to the pseudouridine synthase TruB family. Type 1 subfamily.

The enzyme catalyses uridine(55) in tRNA = pseudouridine(55) in tRNA. Responsible for synthesis of pseudouridine from uracil-55 in the psi GC loop of transfer RNAs. This chain is tRNA pseudouridine synthase B, found in Nitratidesulfovibrio vulgaris (strain DSM 19637 / Miyazaki F) (Desulfovibrio vulgaris).